A 184-amino-acid polypeptide reads, in one-letter code: Photosystem I assembly protein Ycf4 (184 aa).

A run of 2 helical transmembrane segments spans residues 22-42 and 64-84; these read FCWA…GIPS and IVMC…WCTI.

The protein belongs to the Ycf4 family.

Its subcellular location is the plastid. The protein localises to the chloroplast thylakoid membrane. In terms of biological role, seems to be required for the assembly of the photosystem I complex. This Huperzia lucidula (Shining clubmoss) protein is Photosystem I assembly protein Ycf4.